A 376-amino-acid polypeptide reads, in one-letter code: Putative F-box protein At2g33200 (376 aa).

The F-box domain maps to 6–53 (YDWSKLCHDILRLILESLHYKDYHRARTVCSNWYTASTTCKRPLYPWR).

The protein is Putative F-box protein At2g33200 of Arabidopsis thaliana (Mouse-ear cress).